The primary structure comprises 227 residues: uncharacterized protein (227 aa).

A run of 2 helical transmembrane segments spans residues Ile-113–Phe-133 and Phe-141–Ile-161.

It is found in the membrane. This is an uncharacterized protein from Dictyostelium discoideum (Social amoeba).